The sequence spans 138 residues: MATILVDVVSAEASIFSGQAKFVALPGESGELGILPGHTPLITRIQPGAVRIEKEDGSEEFVFVAGGILEVQPKHVTVLADTAIRGGDLDEAKAQEAKRAAEELMQNQSSDLDLARAQSELAVAAAQLAAIARLRRKK.

The protein belongs to the ATPase epsilon chain family. In terms of assembly, F-type ATPases have 2 components, CF(1) - the catalytic core - and CF(0) - the membrane proton channel. CF(1) has five subunits: alpha(3), beta(3), gamma(1), delta(1), epsilon(1). CF(0) has three main subunits: a, b and c.

The protein localises to the cell inner membrane. In terms of biological role, produces ATP from ADP in the presence of a proton gradient across the membrane. The protein is ATP synthase epsilon chain of Cupriavidus necator (strain ATCC 17699 / DSM 428 / KCTC 22496 / NCIMB 10442 / H16 / Stanier 337) (Ralstonia eutropha).